A 188-amino-acid chain; its full sequence is MDTEYEQVNKPWNELYQETTLGNQLMVNVGMEDPEVPLLPSNFLTKVRVGLSGGYITMRRIRIKIIPLVSRKAGVSGKLYLRDISDTTGRKLHCTESLDLGREIRLTMQHLDFSVSTRSDVPIVFGFEELVSPFLEGRELFSISVRWQFGLSKNCYSLPQSKWKVMYQEDALNVKPSKKKASKTDSSV.

Belongs to the tombusvirus/aureusvirus movement protein p22 family. Interacts with host protein HFI22. Post-translationally, phosphorylated.

Its subcellular location is the host membrane. In terms of biological role, transports viral genome to neighboring plant cells directly through plasmosdesmata, without any budding. The movement protein allows efficient cell to cell propagation, by bypassing the host cell wall barrier. The polypeptide is Movement protein (Capsicum annuum (Capsicum pepper)).